The primary structure comprises 391 residues: 1-deoxy-D-xylulose 5-phosphate reductoisomerase (391 aa).

Positions 17, 18, 19, 20, 47, and 130 each coordinate NADPH. Position 131 (Lys-131) interacts with 1-deoxy-D-xylulose 5-phosphate. Position 132 (Glu-132) interacts with NADPH. Residue Asp-156 coordinates Mn(2+). 1-deoxy-D-xylulose 5-phosphate-binding residues include Ser-157, Glu-158, Ser-182, and His-205. Glu-158 is a binding site for Mn(2+). Gly-211 serves as a coordination point for NADPH. 1-deoxy-D-xylulose 5-phosphate-binding residues include Ser-218, Asn-223, Lys-224, and Glu-227. Glu-227 serves as a coordination point for Mn(2+).

Belongs to the DXR family. It depends on Mg(2+) as a cofactor. The cofactor is Mn(2+).

The catalysed reaction is 2-C-methyl-D-erythritol 4-phosphate + NADP(+) = 1-deoxy-D-xylulose 5-phosphate + NADPH + H(+). The protein operates within isoprenoid biosynthesis; isopentenyl diphosphate biosynthesis via DXP pathway; isopentenyl diphosphate from 1-deoxy-D-xylulose 5-phosphate: step 1/6. Functionally, catalyzes the NADPH-dependent rearrangement and reduction of 1-deoxy-D-xylulose-5-phosphate (DXP) to 2-C-methyl-D-erythritol 4-phosphate (MEP). The sequence is that of 1-deoxy-D-xylulose 5-phosphate reductoisomerase from Sinorhizobium medicae (strain WSM419) (Ensifer medicae).